A 395-amino-acid chain; its full sequence is Putative nickel insertion protein (395 aa).

This sequence belongs to the LarC family.

In Roseiflexus castenholzii (strain DSM 13941 / HLO8), this protein is Putative nickel insertion protein.